The following is a 310-amino-acid chain: Apolipoprotein E (310 aa).

Residues 1–18 form the signal peptide; that stretch reads MKVLWAALVVTLLAGCQA. 8 tandem repeats follow at residues 77–98, 99–120, 121–142, 143–164, 165–186, 187–204, 205–226, and 227–248. Positions 77-248 are 8 X 22 AA approximate tandem repeats; the sequence is VLIEETMKEV…RLDEVREQVQ (172 aa). At M140 the chain carries Methionine sulfoxide. At S144 the chain carries Phosphoserine. An LDL and other lipoprotein receptors binding region spans residues 155–165; it reads HLRKLRKRLLR. Position 159–162 (159–162) interacts with heparin; the sequence is LRKR. Residues 203–283 form a lipid-binding and lipoprotein association region; sequence AATVRSLVSK…SWFEPLVQDM (81 aa). A heparin-binding site is contributed by 222 to 229; the sequence is GQRLRGRL. The tract at residues 259–310 is homooligomerization; the sequence is NQMRLQAEAFHARLKSWFEPLVQDMQQRWAELVEKVQLAVGTSPTSESSEKQ. Residues 271-283 are specificity for association with VLDL; it reads RLKSWFEPLVQDM.

The protein belongs to the apolipoprotein A1/A4/E family. As to quaternary structure, homotetramer. May interact with ABCA1; functionally associated with ABCA1 in the biogenesis of HDLs. May interact with APP/A4 amyloid-beta peptide; the interaction is extremely stable in vitro but its physiological significance is unclear. May interact with MAPT. May interact with MAP2. In the cerebrospinal fluid, interacts with secreted SORL1. Interacts with PMEL; this allows the loading of PMEL luminal fragment on ILVs to induce fibril nucleation. In terms of processing, APOE exists as multiple glycosylated and sialylated glycoforms within cells and in plasma. The extent of glycosylation and sialylation are tissue and context specific. Glycated in plasma VLDL. Post-translationally, phosphorylated by FAM20C in the extracellular medium.

It is found in the secreted. It localises to the extracellular space. The protein localises to the extracellular matrix. The protein resides in the extracellular vesicle. Its subcellular location is the endosome. It is found in the multivesicular body. In terms of biological role, APOE is an apolipoprotein, a protein associating with lipid particles, that mainly functions in lipoprotein-mediated lipid transport between organs via the plasma and interstitial fluids. APOE is a core component of plasma lipoproteins and is involved in their production, conversion and clearance. Apolipoproteins are amphipathic molecules that interact both with lipids of the lipoprotein particle core and the aqueous environment of the plasma. As such, APOE associates with chylomicrons, chylomicron remnants, very low density lipoproteins (VLDL) and intermediate density lipoproteins (IDL) but shows a preferential binding to high-density lipoproteins (HDL). It also binds a wide range of cellular receptors including the LDL receptor/LDLR, the LDL receptor-related proteins LRP1, LRP2 and LRP8 and the very low-density lipoprotein receptor/VLDLR that mediate the cellular uptake of the APOE-containing lipoprotein particles. Finally, APOE also has a heparin-binding activity and binds heparan-sulfate proteoglycans on the surface of cells, a property that supports the capture and the receptor-mediated uptake of APOE-containing lipoproteins by cells. A main function of APOE is to mediate lipoprotein clearance through the uptake of chylomicrons, VLDLs, and HDLs by hepatocytes. APOE is also involved in the biosynthesis by the liver of VLDLs as well as their uptake by peripheral tissues ensuring the delivery of triglycerides and energy storage in muscle, heart and adipose tissues. By participating in the lipoprotein-mediated distribution of lipids among tissues, APOE plays a critical role in plasma and tissues lipid homeostasis. APOE is also involved in two steps of reverse cholesterol transport, the HDLs-mediated transport of cholesterol from peripheral tissues to the liver, and thereby plays an important role in cholesterol homeostasis. First, it is functionally associated with ABCA1 in the biogenesis of HDLs in tissues. Second, it is enriched in circulating HDLs and mediates their uptake by hepatocytes. APOE also plays an important role in lipid transport in the central nervous system, regulating neuron survival and sprouting. The polypeptide is Apolipoprotein E (APOE) (Tapirus indicus (Asiatic tapir)).